A 453-amino-acid chain; its full sequence is Trigger factor (453 aa).

The PPIase FKBP-type domain occupies 171-256 (GDRVTVSFKG…ATKVEAPQDV (86 aa)).

The protein belongs to the FKBP-type PPIase family. Tig subfamily.

It is found in the cytoplasm. It catalyses the reaction [protein]-peptidylproline (omega=180) = [protein]-peptidylproline (omega=0). Functionally, involved in protein export. Acts as a chaperone by maintaining the newly synthesized protein in an open conformation. Functions as a peptidyl-prolyl cis-trans isomerase. The polypeptide is Trigger factor (Rhodopseudomonas palustris (strain BisB5)).